The chain runs to 161 residues: Peroxynitrite isomerase (161 aa).

The GXWXGXG signature appears at glycine 17 to glycine 23. Residue histidine 152 coordinates heme b.

This sequence belongs to the nitrobindin family. Homodimer. The cofactor is heme b.

The enzyme catalyses peroxynitrite = nitrate. The protein operates within nitrogen metabolism. Its function is as follows. Heme-binding protein able to scavenge peroxynitrite and to protect free L-tyrosine against peroxynitrite-mediated nitration, by acting as a peroxynitrite isomerase that converts peroxynitrite to nitrate. Therefore, this protein likely plays a role in peroxynitrite sensing and in the detoxification of reactive nitrogen and oxygen species (RNS and ROS, respectively). Is able to bind nitric oxide (NO) in vitro, but may act as a sensor of peroxynitrite levels in vivo. This chain is Peroxynitrite isomerase, found in Mycobacterium leprae (strain TN).